The primary structure comprises 1317 residues: Kinesin-like protein KIF16B (1317 aa).

The Kinesin motor domain occupies 3-358 (SVKVAVRVRP…LRYANRAKNI (356 aa)). 102-109 (GQTGSGKS) lines the ATP pocket. The stretch at 370 to 425 (VKLIRELRAEIARLKTLLAQGNQIALLDSPTALSMEEKLQQNEARVQELTKEWTNK) forms a coiled coil. Position 398 is a phosphoserine (S398). Positions 478-529 (TYVGRDDASTEQDIVLHGLDLESEHCIFENIGGTVTLIPLSGSQCSVNGVQI) constitute an FHA domain. Phosphothreonine is present on T577. A Phosphoserine modification is found at S582. Coiled coils occupy residues 595 to 882 (GLEF…DESV) and 936 to 1087 (LSLD…VQKD). The segment covering 1036–1048 (LASLNSGSREQSG) has biased composition (polar residues). Positions 1036–1057 (LASLNSGSREQSGLQASLEAEQ) are disordered. At S1052 the chain carries Phosphoserine. A PX domain is found at 1182–1296 (DPIKISIPRY…KVGLTLSKHT (115 aa)).

This sequence belongs to the TRAFAC class myosin-kinesin ATPase superfamily. Kinesin family. Interacts with RAB14. Interacts with PTPN21. Primarily expressed in brain. Also present in kidney, liver, intestine, placenta, leukocytes, heart and skeletal muscle (at protein level).

The protein localises to the cytoplasm. Its subcellular location is the cytoskeleton. It localises to the early endosome membrane. It is found in the spindle. Its function is as follows. Plus end-directed microtubule-dependent motor protein involved in endosome transport and receptor recycling and degradation. Regulates the plus end motility of early endosomes and the balance between recycling and degradation of receptors such as EGF receptor (EGFR) and FGF receptor (FGFR). Regulates the Golgi to endosome transport of FGFR-containing vesicles during early development, a key process for developing basement membrane and epiblast and primitive endoderm lineages during early postimplantation development. This is Kinesin-like protein KIF16B (KIF16B) from Homo sapiens (Human).